Here is a 312-residue protein sequence, read N- to C-terminus: tRNA dimethylallyltransferase (312 aa).

17–24 (GPTASGKS) lines the ATP pocket. Substrate is bound at residue 19–24 (TASGKS).

It belongs to the IPP transferase family. In terms of assembly, monomer. The cofactor is Mg(2+).

It carries out the reaction adenosine(37) in tRNA + dimethylallyl diphosphate = N(6)-dimethylallyladenosine(37) in tRNA + diphosphate. Functionally, catalyzes the transfer of a dimethylallyl group onto the adenine at position 37 in tRNAs that read codons beginning with uridine, leading to the formation of N6-(dimethylallyl)adenosine (i(6)A). This is tRNA dimethylallyltransferase from Zymomonas mobilis subsp. mobilis (strain ATCC 31821 / ZM4 / CP4).